Consider the following 306-residue polypeptide: Acetyl-coenzyme A carboxylase carboxyl transferase subunit beta (306 aa).

The CoA carboxyltransferase N-terminal domain maps to 28-297 (LWIKCPDTGQ…TPAGKPSTPV (270 aa)). A disordered region spans residues 287 to 306 (QTPAGKPSTPVAPEPVPDAA). The span at 296–306 (PVAPEPVPDAA) shows a compositional bias: pro residues.

Belongs to the AccD/PCCB family. As to quaternary structure, acetyl-CoA carboxylase is a heterohexamer composed of biotin carboxyl carrier protein (AccB), biotin carboxylase (AccC) and two subunits each of ACCase subunit alpha (AccA) and ACCase subunit beta (AccD).

It localises to the cytoplasm. It catalyses the reaction N(6)-carboxybiotinyl-L-lysyl-[protein] + acetyl-CoA = N(6)-biotinyl-L-lysyl-[protein] + malonyl-CoA. It participates in lipid metabolism; malonyl-CoA biosynthesis; malonyl-CoA from acetyl-CoA: step 1/1. Component of the acetyl coenzyme A carboxylase (ACC) complex. Biotin carboxylase (BC) catalyzes the carboxylation of biotin on its carrier protein (BCCP) and then the CO(2) group is transferred by the transcarboxylase to acetyl-CoA to form malonyl-CoA. The sequence is that of Acetyl-coenzyme A carboxylase carboxyl transferase subunit beta from Methylorubrum populi (strain ATCC BAA-705 / NCIMB 13946 / BJ001) (Methylobacterium populi).